The following is a 574-amino-acid chain: Arginine--tRNA ligase (574 aa).

The 'HIGH' region signature appears at 126–136; sequence PNIAKRMHVGH.

This sequence belongs to the class-I aminoacyl-tRNA synthetase family. In terms of assembly, monomer.

The protein resides in the cytoplasm. The enzyme catalyses tRNA(Arg) + L-arginine + ATP = L-arginyl-tRNA(Arg) + AMP + diphosphate. In Chloroflexus aggregans (strain MD-66 / DSM 9485), this protein is Arginine--tRNA ligase.